The chain runs to 295 residues: Methylamine utilization protein MauJ (295 aa).

Its pathway is one-carbon metabolism; methylamine degradation. The sequence is that of Methylamine utilization protein MauJ (mauJ) from Methylorubrum extorquens (strain ATCC 14718 / DSM 1338 / JCM 2805 / NCIMB 9133 / AM1) (Methylobacterium extorquens).